The following is a 37-amino-acid chain: Large ribosomal subunit protein bL36 (37 aa).

It belongs to the bacterial ribosomal protein bL36 family.

This Symbiobacterium thermophilum (strain DSM 24528 / JCM 14929 / IAM 14863 / T) protein is Large ribosomal subunit protein bL36.